We begin with the raw amino-acid sequence, 247 residues long: Cyclin-Q (247 aa).

This sequence belongs to the cyclin family. Cyclin-like FAM58 subfamily.

Its function is as follows. May be an activating cyclin for the cyclin-associated kinase CDK10. The protein is Cyclin-Q (ccnq) of Danio rerio (Zebrafish).